The chain runs to 262 residues: Type III pantothenate kinase (262 aa).

Position 9–16 (9–16) interacts with ATP; it reads DAGNSRIK. Substrate-binding positions include Tyr-96 and 103–106; that span reads GSDR. The Proton acceptor role is filled by Asp-105. Thr-129 provides a ligand contact to ATP. Substrate is bound at residue Thr-189.

This sequence belongs to the type III pantothenate kinase family. Homodimer. NH4(+) serves as cofactor. K(+) is required as a cofactor.

Its subcellular location is the cytoplasm. The enzyme catalyses (R)-pantothenate + ATP = (R)-4'-phosphopantothenate + ADP + H(+). Its pathway is cofactor biosynthesis; coenzyme A biosynthesis; CoA from (R)-pantothenate: step 1/5. Functionally, catalyzes the phosphorylation of pantothenate (Pan), the first step in CoA biosynthesis. This is Type III pantothenate kinase from Burkholderia multivorans (strain ATCC 17616 / 249).